Consider the following 527-residue polypeptide: Amine oxidase [flavin-containing] A (527 aa).

At Met-1 the chain carries N-acetylmethionine. At 1–497 the chain is on the cytoplasmic side; it reads MESLQKTSDA…PSFWERNLPS (497 aa). Ser-383 is modified (phosphoserine). Cys-406 bears the S-8alpha-FAD cysteine mark. Residues 498–518 traverse the membrane as a helical; Anchor for type IV membrane protein segment; it reads VSGLLKIVGFSTSITALWFVM. The Mitochondrial intermembrane portion of the chain corresponds to 519–527; sequence YRFRLLSRS. The segment at 520 to 522 is interaction with membrane phospholipid headgroups; it reads RFR.

Belongs to the flavin monoamine oxidase family. As to quaternary structure, monomer, homo- or heterodimer (containing two subunits of similar size). Each subunit contains a covalently bound flavin. Enzymatically active as monomer. The cofactor is FAD.

It localises to the mitochondrion outer membrane. It carries out the reaction a secondary aliphatic amine + O2 + H2O = a primary amine + an aldehyde + H2O2. It catalyses the reaction a primary methyl amine + O2 + H2O = an aldehyde + H2O2 + NH4(+). The enzyme catalyses (R)-adrenaline + O2 + H2O = (R)-3,4-dihydroxymandelaldehyde + methylamine + H2O2. The catalysed reaction is dopamine + O2 + H2O = 3,4-dihydroxyphenylacetaldehyde + H2O2 + NH4(+). It carries out the reaction tyramine + O2 + H2O = (4-hydroxyphenyl)acetaldehyde + H2O2 + NH4(+). It catalyses the reaction (R)-noradrenaline + O2 + H2O = (R)-3,4-dihydroxymandelaldehyde + H2O2 + NH4(+). The enzyme catalyses serotonin + O2 + H2O = (5-hydroxyindol-3-yl)acetaldehyde + H2O2 + NH4(+). The catalysed reaction is kynuramine + O2 + H2O = 3-(2-aminophenyl)-3-oxopropanal + H2O2 + NH4(+). It carries out the reaction tryptamine + O2 + H2O = indole-3-acetaldehyde + H2O2 + NH4(+). It catalyses the reaction 2-phenylethylamine + O2 + H2O = 2-phenylacetaldehyde + H2O2 + NH4(+). Catalyzes the oxidative deamination of primary and some secondary amine such as neurotransmitters, with concomitant reduction of oxygen to hydrogen peroxide and has important functions in the metabolism of neuroactive and vasoactive amines in the central nervous system and peripheral tissues. Preferentially oxidizes serotonin. Also catalyzes the oxidative deamination of kynuramine to 3-(2-aminophenyl)-3-oxopropanal that can spontaneously condense to 4-hydroxyquinoline. This chain is Amine oxidase [flavin-containing] A, found in Bos taurus (Bovine).